The chain runs to 372 residues: MRSIIADSKRLVVKVGSSLVTNDGRGLDHDAIGRWAAQIAALRGAGKEVVLVSSGAIAEGMQRLGWSKRPREIDELQAAAAVGQMGLAQVYESRFAEHGIRTAQILLTHADLADRERYLNARSTLLTLLRLGVVPIINENDTVVTDEIKFGDNDTLGALVANLIEGDTLVILTDQPGLFTADPRKDPGATLVAEASAGAPELEAMAGGAGSSIGRGGMLTKILAAKRAAHSGANTVIASGRERDVLVRLAAGEAIGTQLIARTARMAARKQWMADHLQVRGHVVIDAGAVDKLTAGGKSLLPIGVVAVQGVFARGEVIACVDDTGREVARGITNYSSAETKLIQRKPSGEIETVLGYMLEPELIHRDNLVLV.

Lysine 14 serves as a coordination point for ATP. Serine 54, aspartate 141, and asparagine 153 together coordinate substrate. Residue 173–174 coordinates ATP; the sequence is TD. Positions 280-358 constitute a PUA domain; the sequence is RGHVVIDAGA…GEIETVLGYM (79 aa).

Belongs to the glutamate 5-kinase family.

It localises to the cytoplasm. It catalyses the reaction L-glutamate + ATP = L-glutamyl 5-phosphate + ADP. It participates in amino-acid biosynthesis; L-proline biosynthesis; L-glutamate 5-semialdehyde from L-glutamate: step 1/2. Functionally, catalyzes the transfer of a phosphate group to glutamate to form L-glutamate 5-phosphate. The polypeptide is Glutamate 5-kinase (Burkholderia mallei (strain NCTC 10229)).